We begin with the raw amino-acid sequence, 124 residues long: Small ribosomal subunit protein uS12 (124 aa).

The disordered stretch occupies residues glutamine 105–glycine 124. The span at lysine 108–glycine 118 shows a compositional bias: basic residues.

This sequence belongs to the universal ribosomal protein uS12 family. As to quaternary structure, part of the 30S ribosomal subunit. Contacts proteins S8 and S17. May interact with IF1 in the 30S initiation complex.

Functionally, with S4 and S5 plays an important role in translational accuracy. In terms of biological role, interacts with and stabilizes bases of the 16S rRNA that are involved in tRNA selection in the A site and with the mRNA backbone. Located at the interface of the 30S and 50S subunits, it traverses the body of the 30S subunit contacting proteins on the other side and probably holding the rRNA structure together. The combined cluster of proteins S8, S12 and S17 appears to hold together the shoulder and platform of the 30S subunit. This Mycobacterium bovis (strain ATCC BAA-935 / AF2122/97) protein is Small ribosomal subunit protein uS12 (rpsL).